An 81-amino-acid polypeptide reads, in one-letter code: Small ribosomal subunit protein bS16 (81 aa).

The protein belongs to the bacterial ribosomal protein bS16 family.

This Coprothermobacter proteolyticus (strain ATCC 35245 / DSM 5265 / OCM 4 / BT) protein is Small ribosomal subunit protein bS16.